Consider the following 293-residue polypeptide: Ribosomal protein L11 methyltransferase (293 aa).

T145, G166, D188, and N230 together coordinate S-adenosyl-L-methionine.

The protein belongs to the methyltransferase superfamily. PrmA family.

It localises to the cytoplasm. It carries out the reaction L-lysyl-[protein] + 3 S-adenosyl-L-methionine = N(6),N(6),N(6)-trimethyl-L-lysyl-[protein] + 3 S-adenosyl-L-homocysteine + 3 H(+). Its function is as follows. Methylates ribosomal protein L11. The chain is Ribosomal protein L11 methyltransferase from Shewanella baltica (strain OS223).